Consider the following 560-residue polypeptide: Platelet glycoprotein V (560 aa).

Positions 1 to 16 are cleaved as a signal peptide; it reads MLRGTLLCAVLGLLRA. The 34-residue stretch at 17-50 folds into the LRRNT domain; the sequence is QPFPCPPACKCVFRDAAQCSGGDVARISALGLPT. Topologically, residues 17 to 523 are extracellular; sequence QPFPCPPACK…KGQDHSPFWG (507 aa). Asn51 is a glycosylation site (N-linked (GlcNAc...) asparagine). LRR repeat units follow at residues 75 to 96, 99 to 120, 123 to 144, 147 to 168, 171 to 193, 195 to 216, 219 to 240, 243 to 264, 267 to 288, 291 to 312, 340 to 361, 364 to 385, and 388 to 409; these read VLQR…TFSD, KLKT…LLDK, LLEQ…MFQK, NLQE…LFTN, NLKL…LGAQ, KLER…LLNS, ALTE…AFDR, NLSS…LFLH, NLTL…LFGE, GLQE…AFRN, ELQV…LLRG, KLRQ…LFRN, and SLES…VFGA. The N-linked (GlcNAc...) (complex) asparagine glycan is linked to Asn181. N-linked (GlcNAc...) (complex) asparagine glycosylation is present at Asn243. N-linked (GlcNAc...) asparagine glycans are attached at residues Asn267, Asn298, and Asn312. N-linked (GlcNAc...) asparagine glycosylation is present at Asn385. Residues 421–474 enclose the LRRCT domain; sequence NSWRCDCGLGPFLGWLRQHLGLVGGEEPPRCAGPGAHAGLPLWALPGGDAECPG. A disordered region spans residues 469 to 498; that stretch reads DAECPGPRGPPPRPAADSSSEAPVHPALAP. A glycan (N-linked (GlcNAc...) asparagine) is linked at Asn499. A helical transmembrane segment spans residues 524–544; the sequence is FYFLLLAVQAMITVIIVFAMI. The Cytoplasmic portion of the chain corresponds to 545–560; it reads KIGQLFRKLIRERALG.

The N-terminus is blocked. In terms of tissue distribution, platelets and megakaryocytes.

The protein localises to the membrane. The GPIb-V-IX complex functions as the vWF receptor and mediates vWF-dependent platelet adhesion to blood vessels. The adhesion of platelets to injured vascular surfaces in the arterial circulation is a critical initiating event in hemostasis. The chain is Platelet glycoprotein V (GP5) from Homo sapiens (Human).